A 386-amino-acid chain; its full sequence is Putative 8-amino-7-oxononanoate synthase (386 aa).

Position 22 (Arg22) interacts with substrate. Pyridoxal 5'-phosphate is bound at residue 109-110 (GY). Substrate is bound at residue His134. Residues Ser182, 207-210 (DEAH), and 238-241 (TLSK) each bind pyridoxal 5'-phosphate. Lys241 is subject to N6-(pyridoxal phosphate)lysine. Residue Thr356 coordinates substrate.

The protein belongs to the class-II pyridoxal-phosphate-dependent aminotransferase family. BioF subfamily. Homodimer. Pyridoxal 5'-phosphate serves as cofactor.

The enzyme catalyses 6-carboxyhexanoyl-[ACP] + L-alanine + H(+) = (8S)-8-amino-7-oxononanoate + holo-[ACP] + CO2. Its pathway is cofactor biosynthesis; biotin biosynthesis. Its function is as follows. Catalyzes the decarboxylative condensation of pimeloyl-[acyl-carrier protein] and L-alanine to produce 8-amino-7-oxononanoate (AON), [acyl-carrier protein], and carbon dioxide. This Trichormus variabilis (strain ATCC 29413 / PCC 7937) (Anabaena variabilis) protein is Putative 8-amino-7-oxononanoate synthase (bioF).